Reading from the N-terminus, the 192-residue chain is Orotate phosphoribosyltransferase (192 aa).

116 to 124 provides a ligand contact to 5-phospho-alpha-D-ribose 1-diphosphate; the sequence is EDIVTTGLS. Positions 120 and 148 each coordinate orotate.

The protein belongs to the purine/pyrimidine phosphoribosyltransferase family. PyrE subfamily. In terms of assembly, homodimer. Requires Mg(2+) as cofactor.

The enzyme catalyses orotidine 5'-phosphate + diphosphate = orotate + 5-phospho-alpha-D-ribose 1-diphosphate. It functions in the pathway pyrimidine metabolism; UMP biosynthesis via de novo pathway; UMP from orotate: step 1/2. In terms of biological role, catalyzes the transfer of a ribosyl phosphate group from 5-phosphoribose 1-diphosphate to orotate, leading to the formation of orotidine monophosphate (OMP). This Bartonella tribocorum (strain CIP 105476 / IBS 506) protein is Orotate phosphoribosyltransferase.